Here is a 161-residue protein sequence, read N- to C-terminus: Small ribosomal subunit protein bS16 (161 aa).

A disordered region spans residues 114-161 (EGGPTTEATKPKKKSPAKKAKGGEGDADAAAEKVEASAEGEQTESAES). The span at 124 to 133 (PKKKSPAKKA) shows a compositional bias: basic residues.

This sequence belongs to the bacterial ribosomal protein bS16 family.

This is Small ribosomal subunit protein bS16 from Mycobacterium marinum (strain ATCC BAA-535 / M).